A 310-amino-acid chain; its full sequence is Coproporphyrin III ferrochelatase (310 aa).

Tyr-13 is a Fe-coproporphyrin III binding site. Tyr-13 contacts N-methylmesoporphyrin. Glu-20 contributes to the Mg(2+) binding site. Arg-30 serves as a coordination point for Fe-coproporphyrin III. 31-33 (RGR) is an N-methylmesoporphyrin binding site. Residue Arg-46 participates in Mg(2+) binding. Fe-coproporphyrin III is bound by residues 46-47 (RY), Ser-54, and Tyr-125. N-methylmesoporphyrin contacts are provided by His-183 and Lys-188. His-183 lines the Fe(2+) pocket. Glu-264 is a binding site for Fe(2+). Asp-268 and Glu-272 together coordinate Mg(2+).

Belongs to the ferrochelatase family. As to quaternary structure, monomer. Interacts with frataxin/Fra.

It is found in the cytoplasm. It carries out the reaction Fe-coproporphyrin III + 2 H(+) = coproporphyrin III + Fe(2+). It participates in porphyrin-containing compound metabolism; protoheme biosynthesis. Its activity is regulated as follows. Stimulated by Mg(2+). Inhibited by Cd(2+). Inhibited by N-methylmesoporphyrin (N-MeMP) and 2,4-disulfonic acid deuteroporphyrin IX (dSDP). Involved in coproporphyrin-dependent heme b biosynthesis. Catalyzes the insertion of ferrous iron into coproporphyrin III to form Fe-coproporphyrin III. It can also insert iron into protoporphyrin IX. Has weaker activity with 2,4 disulfonate, deuteroporphyrin and 2,4 hydroxyethyl. In vitro, can also use Zn(2+) or Cu(2+). This is Coproporphyrin III ferrochelatase from Bacillus subtilis (strain 168).